The sequence spans 521 residues: GMP synthase [glutamine-hydrolyzing] (521 aa).

A Glutamine amidotransferase type-1 domain is found at 8-203; that stretch reads KILILDFGAQ…VVDVCGCQTL (196 aa). Cys-85 (nucleophile) is an active-site residue. Active-site residues include His-177 and Glu-179. Residues 204–396 enclose the GMPS ATP-PPase domain; sequence WTAANIIDDQ…LGLPRTMVYR (193 aa). 231–237 is an ATP binding site; that stretch reads SGGVDSS.

In terms of assembly, homodimer.

The catalysed reaction is XMP + L-glutamine + ATP + H2O = GMP + L-glutamate + AMP + diphosphate + 2 H(+). Its pathway is purine metabolism; GMP biosynthesis; GMP from XMP (L-Gln route): step 1/1. Functionally, catalyzes the synthesis of GMP from XMP. The sequence is that of GMP synthase [glutamine-hydrolyzing] from Xanthomonas campestris pv. campestris (strain B100).